The chain runs to 140 residues: Nucleoside diphosphate kinase (140 aa).

ATP is bound by residues lysine 11, phenylalanine 59, arginine 87, threonine 93, arginine 104, and asparagine 114. Catalysis depends on histidine 117, which acts as the Pros-phosphohistidine intermediate.

The protein belongs to the NDK family. As to quaternary structure, homotetramer. The cofactor is Mg(2+).

The protein localises to the cytoplasm. The catalysed reaction is a 2'-deoxyribonucleoside 5'-diphosphate + ATP = a 2'-deoxyribonucleoside 5'-triphosphate + ADP. It carries out the reaction a ribonucleoside 5'-diphosphate + ATP = a ribonucleoside 5'-triphosphate + ADP. Its function is as follows. Major role in the synthesis of nucleoside triphosphates other than ATP. The ATP gamma phosphate is transferred to the NDP beta phosphate via a ping-pong mechanism, using a phosphorylated active-site intermediate. The polypeptide is Nucleoside diphosphate kinase (Brucella canis (strain ATCC 23365 / NCTC 10854 / RM-666)).